The following is a 498-amino-acid chain: Glycerol kinase (498 aa).

Thr11 is a binding site for ADP. Thr11, Ser12, and Ser13 together coordinate ATP. Thr11 provides a ligand contact to sn-glycerol 3-phosphate. Arg15 contacts ADP. Residues Arg81, Glu82, Tyr133, and Asp242 each coordinate sn-glycerol 3-phosphate. Positions 81, 82, 133, 242, and 243 each coordinate glycerol. Residues Thr264 and Gly307 each coordinate ADP. Residues Thr264, Gly307, Gln311, and Gly408 each coordinate ATP. Residues Gly408 and Asn412 each coordinate ADP.

The protein belongs to the FGGY kinase family.

It carries out the reaction glycerol + ATP = sn-glycerol 3-phosphate + ADP + H(+). The protein operates within polyol metabolism; glycerol degradation via glycerol kinase pathway; sn-glycerol 3-phosphate from glycerol: step 1/1. Inhibited by fructose 1,6-bisphosphate (FBP). Key enzyme in the regulation of glycerol uptake and metabolism. Catalyzes the phosphorylation of glycerol to yield sn-glycerol 3-phosphate. The protein is Glycerol kinase of Ralstonia nicotianae (strain ATCC BAA-1114 / GMI1000) (Ralstonia solanacearum).